The primary structure comprises 309 residues: THAP domain-containing protein 7 (309 aa).

A THAP-type zinc finger spans residues methionine 1 to phenylalanine 93. Residues threonine 158–valine 209 form a disordered region. The residue at position 162 (serine 162) is a Phosphoserine. The span at glutamate 198 to valine 209 shows a compositional bias: pro residues. Residue serine 210 is modified to Phosphoserine. An HCFC1-binding motif (HBM) motif is present at residues glutamate 229–tyrosine 232.

As to quaternary structure, forms homodimers. Interacts with HDAC3 and nuclear hormone receptor corepressors. Interacts via HBM with HCFC1.

It localises to the nucleus. Its subcellular location is the chromosome. Chromatin-associated, histone tail-binding protein that represses transcription via recruitment of HDAC3 and nuclear hormone receptor corepressors. This chain is THAP domain-containing protein 7 (THAP7), found in Homo sapiens (Human).